Reading from the N-terminus, the 69-residue chain is Double-strand break reduction protein (69 aa).

In terms of biological role, helps to maintain the integrity of the chromosome by lowering the steady-state level of double strand breaks. This region of DNA acts as an antitoxin to toxin RalR, a DNase, but it seems to be sRNA RalA that has the antitoxin activity and not this putative protein. Therefore the identity of this as a protein-coding gene has been cast into doubt. The chain is Double-strand break reduction protein from Escherichia coli (strain K12).